Here is a 589-residue protein sequence, read N- to C-terminus: Protein NRT1/ PTR FAMILY 4.7 (589 aa).

12 helical membrane-spanning segments follow: residues 59–79 (GMLA…AFLA), 105–125 (AFMG…DAFF), 127–147 (TFHI…VLTV), 160–180 (VFLF…KGSL), 201–221 (FFFN…VTVV), 230–250 (WSYG…VFLA), 344–364 (IVIK…CLAQ), 383–403 (FTVP…ILAP), 429–449 (IGTG…VETK), 471–491 (LPIT…ADLF), 520–540 (LAMG…VTGL), and 560–580 (FYWL…FWAS).

Belongs to the major facilitator superfamily. Proton-dependent oligopeptide transporter (POT/PTR) (TC 2.A.17) family. As to expression, expressed in flowers.

The protein localises to the membrane. The polypeptide is Protein NRT1/ PTR FAMILY 4.7 (NPF4.7) (Arabidopsis thaliana (Mouse-ear cress)).